The following is a 254-amino-acid chain: Esterase YbfF (254 aa).

Active-site residues include Ser89 and His234.

Belongs to the DmpD/TodF/XylF esterase family.

Displays esterase activity toward palmitoyl-CoA, malonyl-CoA and pNP-butyrate. This Escherichia coli (strain K12) protein is Esterase YbfF (ybfF).